Here is a 166-residue protein sequence, read N- to C-terminus: Immunity protein RhsIB (166 aa).

Immunity component of a toxin-immunity protein module, which functions as a cellular contact-dependent growth inhibition (CDI) system. Specifically inhibits its cognate toxin RhsB. Cell contact is necessary for growth inhibition. The protein is Immunity protein RhsIB (rhsIB) of Dickeya dadantii (strain 3937) (Erwinia chrysanthemi (strain 3937)).